Reading from the N-terminus, the 435-residue chain is Probable xyloglucan galactosyltransferase GT19 (435 aa).

At 1–6 (MASKST) the chain is on the cytoplasmic side. The helical; Signal-anchor for type II membrane protein transmembrane segment at 7 to 23 (VTTLTIFFFFFFFFIEP) threads the bilayer. The Lumenal portion of the chain corresponds to 24–435 (KVQSQQISAV…GVLDRIISRV (412 aa)). Asparagine 140, asparagine 203, and asparagine 277 each carry an N-linked (GlcNAc...) asparagine glycan.

Belongs to the glycosyltransferase 47 family. In terms of tissue distribution, expressed in roots, hypocotyls, cotyledons, leaves, stems, stamens and pollen grains.

Its subcellular location is the golgi apparatus membrane. Its function is as follows. Functions in xyloglucan synthesis by adding side chains to the xylosylated glucan backbone. Involved in the galactosylation of hemicellulose xyloglucan. The chain is Probable xyloglucan galactosyltransferase GT19 from Arabidopsis thaliana (Mouse-ear cress).